The following is a 142-amino-acid chain: Sorting nexin-3 (142 aa).

The 118-residue stretch at 21 to 138 (NFLEIEVRNP…ASFIQDPNWD (118 aa)) folds into the PX domain. The a 1,2-diacyl-sn-glycero-3-phospho-(1D-myo-inositol-3-phosphate) site is built by R64, S66, K90, R95, and R104.

The protein belongs to the sorting nexin family.

It localises to the cytoplasm. It is found in the golgi apparatus membrane. The protein localises to the prevacuolar compartment membrane. Required for retention of late Golgi membrane proteins. Component of the retrieval machinery that functions by direct interaction with the cytosolic tails of certain TGN membrane proteins during the sorting/budding process at the prevacuolar compartment. Binds phosphatidylinositol 3-phosphate (PtdIns(P3)). The polypeptide is Sorting nexin-3 (snx3) (Aspergillus fumigatus (strain ATCC MYA-4609 / CBS 101355 / FGSC A1100 / Af293) (Neosartorya fumigata)).